The following is a 328-amino-acid chain: Stress response kinase A (328 aa).

D201 serves as the catalytic Proton acceptor. Positions 206 and 217 each coordinate Mg(2+). Residue D217 is part of the active site.

Belongs to the SrkA/RdoA protein kinase family. In terms of assembly, monomer. Requires Mg(2+) as cofactor.

Its subcellular location is the cytoplasm. The catalysed reaction is L-seryl-[protein] + ATP = O-phospho-L-seryl-[protein] + ADP + H(+). The enzyme catalyses L-threonyl-[protein] + ATP = O-phospho-L-threonyl-[protein] + ADP + H(+). Its function is as follows. A protein kinase that phosphorylates Ser and Thr residues. Probably acts to suppress the effects of stress linked to accumulation of reactive oxygen species. Probably involved in the extracytoplasmic stress response. Also has a role in LPS synthesis, through regulation of the galETK expression. In terms of biological role, a protein kinase that phosphorylates Ser and Thr residues. Probably acts to suppress the effects of stress linked to accumulation of reactive oxygen species. Probably involved in the extracytoplasmic stress response. The protein is Stress response kinase A of Shigella flexneri.